A 322-amino-acid polypeptide reads, in one-letter code: uncharacterized protein (322 aa).

Composition is skewed to basic residues over residues 1-16 (MPGN…KSGT) and 43-61 (LRPH…RRPV). Positions 1–69 (MPGNSRRRGA…PVKRADETET (69 aa)) are disordered. 3 residues coordinate S-adenosyl-L-methionine: Gly261, Ile281, and Leu290.

The protein belongs to the class IV-like SAM-binding methyltransferase superfamily. RNA methyltransferase TrmH family.

This is an uncharacterized protein from Mycobacterium tuberculosis (strain CDC 1551 / Oshkosh).